The following is a 1034-amino-acid chain: Integrin alpha-V (1034 aa).

A signal peptide spans 1 to 19 (MAALRASLLLSCALTAARA). The Extracellular segment spans residues 20 to 978 (FNLDAERPAV…WGIQPQPMPV (959 aa)). FG-GAP repeat units lie at residues 21–86 (NLDA…RNCQ), 97–158 (DFAP…VEYA), 161–213 (RSTT…LAKY), 225–279 (QLAT…GKNM), 280–345 (SSMY…GGFQ), 346–403 (IAKL…GLNA), and 407–470 (RILE…VNPT). N-linked (GlcNAc...) asparagine glycosylation occurs at Asn-62. Disulfide bonds link Cys-77-Cys-85, Cys-126-Cys-146, and Cys-160-Cys-173. 4 residues coordinate Ca(2+): Asp-248, Asp-252, Ile-254, and Asp-256. N-linked (GlcNAc...) asparagine glycosylation is found at Asn-278 and Asn-284. Ca(2+) is bound by residues Asp-302, Asn-304, Asp-306, Tyr-308, Asp-310, Asp-367, Asp-369, Asp-371, Phe-373, Asp-375, Asp-431, Asp-433, Asn-435, Tyr-437, and Asp-439. 2 disulfides stabilise this stretch: Cys-479/Cys-488 and Cys-494/Cys-551. 2 N-linked (GlcNAc...) asparagine glycosylation sites follow: Asn-540 and Asn-601. 2 disulfide bridges follow: Cys-612/Cys-618 and Cys-684/Cys-697. N-linked (GlcNAc...) asparagine glycosylation is found at Asn-690, Asn-821, Asn-837, and Asn-860. 2 disulfide bridges follow: Cys-838-Cys-900 and Cys-890-Cys-895. N-linked (GlcNAc...) asparagine glycosylation is found at Asn-931, Asn-951, Asn-959, and Asn-966. A helical transmembrane segment spans residues 979-1002 (PVWVIILAVLAGLLLLAVLVLVMY). Over 1003–1034 (RMGFFKRVRPPQEEQEREQLQPHENGEGTSEA) the chain is Cytoplasmic. The short motif at 1005 to 1009 (GFFKR) is the GFFKR motif element. Positions 1013 to 1028 (PQEEQEREQLQPHENG) are enriched in basic and acidic residues. Positions 1013–1034 (PQEEQEREQLQPHENGEGTSEA) are disordered.

It belongs to the integrin alpha chain family. As to quaternary structure, heterodimer of an alpha and a beta subunit. The alpha subunit is composed of a heavy and a light chain linked by a disulfide bond. Alpha-V (ITGAV) associates with either beta-1 (ITGB1), beta-3 (ITGB3), beta-5 (ITGB5), beta-6 (ITGB6) or beta-8 (ITGB8). Interacts with RAB25. Interacts with CIB1. Integrins ITGAV:ITGB3 and ITGAV:ITGB5 interact with FBLN5 (via N-terminus). ITGAV:ITGB3 and ITGAV:ITGB5 interact with CCN3. ITGAV:ITGB3 interacts with ADGRA2. ITGAV:ITGB3 interacts with FGF2; it is likely that FGF2 can simultaneously bind ITGAV:ITGB3 and FGF receptors. ITGAV:ITGB3 is found in a ternary complex with CX3CR1 and CX3CL1. ITGAV:ITGB3 is found in a ternary complex with NRG1 and ERBB3. ITGAV:ITGB3 is found in a ternary complex with FGF1 and FGFR1. ITGAV:ITGB3 is found in a ternary complex with IGF1 and IGF1R. ITGAV:ITGB3 interacts with IGF2. ITGAV:ITGB3 and ITGAV:ITGB6 interact with FBN1. ITGAV:ITGB3 interacts with CD9, CD81 and CD151 (via second extracellular domain). ITGAV:ITGB6 interacts with TGFB1.

Its subcellular location is the membrane. It is found in the cell junction. It localises to the focal adhesion. Functionally, the alpha-V (ITGAV) integrins are receptors for vitronectin, cytotactin, fibronectin, fibrinogen, laminin, matrix metalloproteinase-2, osteopontin, osteomodulin, prothrombin, thrombospondin, TGFB1 and vWF. They recognize the sequence R-G-D in a wide array of ligands. Alpha-V integrins may play a role in embryo implantation, angiogenesis and wound healing. ITGAV:ITGB3 binds to fractalkine (CX3CL1) and may act as its coreceptor in CX3CR1-dependent fractalkine signaling. ITGAV:ITGB3 binds to NRG1 (via EGF domain) and this binding is essential for NRG1-ERBB signaling. ITGAV:ITGB3 binds to FGF1 and this binding is essential for FGF1 signaling. ITGAV:ITGB3 binds to FGF2 and this binding is essential for FGF2 signaling. ITGAV:ITGB3 binds to IGF1 and this binding is essential for IGF1 signaling. ITGAV:ITGB3 binds to IGF2 and this binding is essential for IGF2 signaling. ITGAV:ITGB3 binds to IL1B and this binding is essential for IL1B signaling. ITGAV:ITGB3 binds to PLA2G2A via a site (site 2) which is distinct from the classical ligand-binding site (site 1) and this induces integrin conformational changes and enhanced ligand binding to site 1. ITGAV:ITGB3 and ITGAV:ITGB6 act as receptors for fibrillin-1 (FBN1) and mediate R-G-D-dependent cell adhesion to FBN1. Integrin alpha-V/beta-6 or alpha-V/beta-8 (ITGAV:ITGB6 or ITGAV:ITGB8) mediates R-G-D-dependent release of transforming growth factor beta-1 (TGF-beta-1) from regulatory Latency-associated peptide (LAP), thereby playing a key role in TGF-beta-1 activation. ITGAV:ITGB3 acts as a receptor for CD40LG. ITGAV:ITGB3 acts as a receptor for IBSP and promotes cell adhesion and migration to IBSP. The sequence is that of Integrin alpha-V (ITGAV) from Gallus gallus (Chicken).